A 512-amino-acid chain; its full sequence is MDIIFEQALFPLFCFVLSFFIIFFTTTRPRSSRKVVPSPPGPPRLPIIGNIHLVGRNPHHSFADLSKTYGPIMSLKFGSLNTVVVTSPEAAREVLRTYDQILSSRTPTNSIRSINHDKVSVVWLPPSSSRWRLLRKLSATQLFSPQRIEATKTLRENKVKELVSFMSESSEREEAVDISRATFITALNIISNILFSVDLGNYDSNKSGVFQDTVIGVMEAVGNPDAANFFPFLGFLDLQGNRKTLKACSERLFKVFRGFIDAKLAEKSLRDTNSKDVRERDFVDVLLDLTEGDEAELNTNDIVHLLLDLFGAGTDTNSSTVEWAMAELLRNPETMVKAQAEIDCVIGQKGVVEESDISALPYLQAVVKETFRLHPAAPLLVPRKAESDVEVLGFMVPKDTQVFVNVWAIGRDPNVWENSSRFKPERFLGKDIDLRGRDYELTPFGAGRRICPGLPLAVKTVPLMLASLLYSFDWKLPNGVGSEDLDMDETFGLTLHKTNPLHAVPVKKRGRN.

The chain crosses the membrane as a helical span at residues 3 to 23 (IIFEQALFPLFCFVLSFFIIF). Cysteine 451 is a heme binding site.

Belongs to the cytochrome P450 family. Heme is required as a cofactor.

It is found in the membrane. This chain is Cytochrome P450 76C2 (CYP76C2), found in Arabidopsis thaliana (Mouse-ear cress).